The sequence spans 259 residues: Deoxyribose-phosphate aldolase (259 aa).

The active-site Proton donor/acceptor is D102. The Schiff-base intermediate with acetaldehyde role is filled by K167. The active-site Proton donor/acceptor is K201.

The protein belongs to the DeoC/FbaB aldolase family. DeoC type 2 subfamily.

It localises to the cytoplasm. The enzyme catalyses 2-deoxy-D-ribose 5-phosphate = D-glyceraldehyde 3-phosphate + acetaldehyde. It participates in carbohydrate degradation; 2-deoxy-D-ribose 1-phosphate degradation; D-glyceraldehyde 3-phosphate and acetaldehyde from 2-deoxy-alpha-D-ribose 1-phosphate: step 2/2. Functionally, catalyzes a reversible aldol reaction between acetaldehyde and D-glyceraldehyde 3-phosphate to generate 2-deoxy-D-ribose 5-phosphate. This Klebsiella pneumoniae (strain 342) protein is Deoxyribose-phosphate aldolase.